A 586-amino-acid chain; its full sequence is UvrABC system protein C (586 aa).

Residues 17 to 94 (HKPGCYLWKD…IKQYKPRFNL (78 aa)) form the GIY-YIG domain. Residues 201-236 (EQVLNHLQQQEIKASEQQNFEAARHFLDLQKAVLEL) form the UVR domain.

The protein belongs to the UvrC family. In terms of assembly, interacts with UvrB in an incision complex.

The protein localises to the cytoplasm. Its function is as follows. The UvrABC repair system catalyzes the recognition and processing of DNA lesions. UvrC both incises the 5' and 3' sides of the lesion. The N-terminal half is responsible for the 3' incision and the C-terminal half is responsible for the 5' incision. The sequence is that of UvrABC system protein C from Mycoplasma pneumoniae (strain ATCC 29342 / M129 / Subtype 1) (Mycoplasmoides pneumoniae).